Reading from the N-terminus, the 369-residue chain is Tetraacyldisaccharide 4'-kinase (369 aa).

68–75 (VVGGTGKT) contributes to the ATP binding site.

The protein belongs to the LpxK family.

It carries out the reaction a lipid A disaccharide + ATP = a lipid IVA + ADP + H(+). Its pathway is glycolipid biosynthesis; lipid IV(A) biosynthesis; lipid IV(A) from (3R)-3-hydroxytetradecanoyl-[acyl-carrier-protein] and UDP-N-acetyl-alpha-D-glucosamine: step 6/6. Functionally, transfers the gamma-phosphate of ATP to the 4'-position of a tetraacyldisaccharide 1-phosphate intermediate (termed DS-1-P) to form tetraacyldisaccharide 1,4'-bis-phosphate (lipid IVA). The protein is Tetraacyldisaccharide 4'-kinase of Chlamydia muridarum (strain MoPn / Nigg).